The primary structure comprises 81 residues: Small cysteine-rich protein 4 (81 aa).

The signal sequence occupies residues 1–23 (MDTKVACLLLIILGALTVQGAVS). Residues 24–25 (GN) constitute a propeptide that is removed on maturation.

It belongs to the Cnidaria small cysteine-rich protein (SCRiP) family. beta subfamily. Post-translationally, contains 4 disulfide bonds.

It is found in the secreted. Its subcellular location is the nematocyst. Functionally, induces neurotoxic symptoms on zebrafish. Has also been claimed to be implied in calcification, but tests on homolog proteins suggest that proteins of this family have a neurotoxic function and not a calcification function. The chain is Small cysteine-rich protein 4 from Orbicella faveolata (Mountainous star coral).